The sequence spans 256 residues: 3-deoxy-manno-octulosonate cytidylyltransferase (256 aa).

This sequence belongs to the KdsB family.

The protein resides in the cytoplasm. It catalyses the reaction 3-deoxy-alpha-D-manno-oct-2-ulosonate + CTP = CMP-3-deoxy-beta-D-manno-octulosonate + diphosphate. It functions in the pathway nucleotide-sugar biosynthesis; CMP-3-deoxy-D-manno-octulosonate biosynthesis; CMP-3-deoxy-D-manno-octulosonate from 3-deoxy-D-manno-octulosonate and CTP: step 1/1. It participates in bacterial outer membrane biogenesis; lipopolysaccharide biosynthesis. In terms of biological role, activates KDO (a required 8-carbon sugar) for incorporation into bacterial lipopolysaccharide in Gram-negative bacteria. This is 3-deoxy-manno-octulosonate cytidylyltransferase from Histophilus somni (strain 2336) (Haemophilus somnus).